The following is a 941-amino-acid chain: Cell wall protein IFF3 (941 aa).

The first 20 residues, 1–20 (MQLFQNILVSIALLTQVVFA), serve as a signal peptide directing secretion. Residues Asn-36, Asn-367, Asn-686, Asn-732, Asn-790, Asn-818, Asn-825, Asn-884, and Asn-917 are each glycosylated (N-linked (GlcNAc...) asparagine). Asn-917 carries GPI-anchor amidated asparagine lipidation. Residues 918 to 941 (GSNKESIENIKYLTLVVFGLMMFM) constitute a propeptide, removed in mature form.

This sequence belongs to the HYR1/IFF family. Post-translationally, the GPI-anchor is attached to the protein in the endoplasmic reticulum and serves to target the protein to the cell surface. There, the glucosamine-inositol phospholipid moiety is cleaved off and the GPI-modified mannoprotein is covalently attached via its lipidless GPI glycan remnant to the 1,6-beta-glucan of the outer cell wall layer.

The protein resides in the secreted. It localises to the cell wall. Its subcellular location is the membrane. Functionally, GPI-anchored cell wall protein involved in cell wall organization, hyphal growth, as well as in host-fungal interaction and virulence. The protein is Cell wall protein IFF3 (IFF3) of Candida albicans (strain SC5314 / ATCC MYA-2876) (Yeast).